Reading from the N-terminus, the 185-residue chain is Threonylcarbamoyl-AMP synthase (185 aa).

Residues 4–185 enclose the YrdC-like domain; the sequence is SWRVQQAARE…LATGEIVRPG (182 aa).

Belongs to the SUA5 family. TsaC subfamily.

It is found in the cytoplasm. The catalysed reaction is L-threonine + hydrogencarbonate + ATP = L-threonylcarbamoyladenylate + diphosphate + H2O. In terms of biological role, required for the formation of a threonylcarbamoyl group on adenosine at position 37 (t(6)A37) in tRNAs that read codons beginning with adenine. Catalyzes the conversion of L-threonine, HCO(3)(-)/CO(2) and ATP to give threonylcarbamoyl-AMP (TC-AMP) as the acyladenylate intermediate, with the release of diphosphate. The protein is Threonylcarbamoyl-AMP synthase of Pseudomonas putida (strain W619).